The sequence spans 306 residues: MALRHFLTLRDLSTLELNRILERASELKKMQQSNKVYQPFVGKVLGMIFEKSSTRTRISFEAGINQFGGSAIFLSPRDTQLGRGEPIEDSARVISSMLDIVMIRTFGHDIVERFASYSKVPVINGLTDDHHPCQLLADLQTYIEHRGSIEGKTVAWIGDGNNMCNSYIEAAHMMGFKLKIASPKGYEPKPEFLAEFGHCVELFDNAEDAAVNADLIVTDVWASMGQEEEQKLREKAFANFQVNEKLMGLAHPDCLFMHCLPAHRGEEISETMLDHKNAVVWDEAENRLHAQKALMEFLLNENLKKA.

Carbamoyl phosphate contacts are provided by residues 53-56, glutamine 80, arginine 104, and 131-134; these read STRT and HPCQ. L-ornithine-binding positions include asparagine 162, aspartate 219, and 223 to 224; that span reads SM. Carbamoyl phosphate contacts are provided by residues 259-260 and arginine 287; that span reads CL.

Belongs to the aspartate/ornithine carbamoyltransferase superfamily. OTCase family.

The protein localises to the cytoplasm. It carries out the reaction carbamoyl phosphate + L-ornithine = L-citrulline + phosphate + H(+). It functions in the pathway amino-acid degradation; L-arginine degradation via ADI pathway; carbamoyl phosphate from L-arginine: step 2/2. Reversibly catalyzes the transfer of the carbamoyl group from carbamoyl phosphate (CP) to the N(epsilon) atom of ornithine (ORN) to produce L-citrulline. The polypeptide is Ornithine carbamoyltransferase (Acinetobacter baumannii (strain AYE)).